The chain runs to 226 residues: GTP-binding nuclear protein Ran-3 (226 aa).

The 165-residue stretch at 14–178 (GYPSFKLILV…LYLARKLTGD (165 aa)) folds into the Small GTPase Ran-type domain. 25–32 (DGGTGKTT) serves as a coordination point for GTP. Residues 44–52 (KRYEPTIGV) are switch-I. Residues Gly75, 129 to 132 (NKVD), and 157 to 159 (SAK) contribute to the GTP site. The segment at 75-91 (GQEKFGGLRDGYYIHGH) is switch-II.

It belongs to the small GTPase superfamily. Ran family. In terms of assembly, found in a nuclear export complex with RanGTP, exportin and pre-miRNA.

The protein localises to the nucleus. GTP-binding protein involved in nucleocytoplasmic transport. Required for the import of protein into the nucleus and also for RNA export. Involved in chromatin condensation and control of cell cycle. This is GTP-binding nuclear protein Ran-3 (RAN3) from Oryza sativa subsp. indica (Rice).